The chain runs to 150 residues: Ribosome-binding factor A (150 aa).

The disordered stretch occupies residues 126–150 (EVARDLSHDDDEDGGADEAPRNGDE).

The protein belongs to the RbfA family. As to quaternary structure, monomer. Binds 30S ribosomal subunits, but not 50S ribosomal subunits or 70S ribosomes.

It is found in the cytoplasm. Its function is as follows. One of several proteins that assist in the late maturation steps of the functional core of the 30S ribosomal subunit. Associates with free 30S ribosomal subunits (but not with 30S subunits that are part of 70S ribosomes or polysomes). Required for efficient processing of 16S rRNA. May interact with the 5'-terminal helix region of 16S rRNA. The chain is Ribosome-binding factor A from Brucella abortus (strain S19).